A 52-amino-acid chain; its full sequence is uncharacterized protein (52 aa).

The interval 1–52 (MSLRPCLTPSSMQYSDIYIPTPTPTHHTHTPTPHPHPHTHTHTHHNPNPTLF) is disordered. A compositionally biased stretch (basic residues) spans 35 to 45 (PHPHTHTHTHH).

This is an uncharacterized protein from Saccharomyces cerevisiae (strain ATCC 204508 / S288c) (Baker's yeast).